Here is a 475-residue protein sequence, read N- to C-terminus: MKNFQDKVKKLVAEMRRVNQIHFIGIGGAGMSGIAEVLLNEGYQISGSDIADGAVTQRLAKAGAKVFIGHQAENIEGASVVVASSAINESNPEVAAAKEARIPVIQRAQMLAEIMRFRHGIAIAGTHGKTTTTAMISMIYTEAGLDPTFVNGGLVKSAGKNAHLGASRYLIAEADESDASFLHLQPMVSVVTNIEPDHMDTYGGDFEKMKETYVRFLRNLPFYGLAVMCADDETVMEIAPKVGRQVISYGFSEKADYRIEDYQQTGFQGHYTVVCPTGERIEILLNVPGRHNALNATAALAVAKEEGIANEAILAALADFQGAGRRFDQLGSFIRPNGKVMLVDDYGHHPTEVDVTIKAARQGWENKRVVMVFQPHRYSRTRDLFDDFVQVLSQVDALIMLNVYAAGEAPIVGAESKDLCRSIRNLGKVDPILVSDTSQLGEVLDQIIQDGDLILAQGAGNVSKLSRDLAESWKA.

ATP is bound at residue 125-131 (GTHGKTT).

Belongs to the MurCDEF family.

Its subcellular location is the cytoplasm. It carries out the reaction UDP-N-acetyl-alpha-D-muramate + L-alanine + ATP = UDP-N-acetyl-alpha-D-muramoyl-L-alanine + ADP + phosphate + H(+). It functions in the pathway cell wall biogenesis; peptidoglycan biosynthesis. Its function is as follows. Cell wall formation. The sequence is that of UDP-N-acetylmuramate--L-alanine ligase from Glaesserella parasuis serovar 5 (strain SH0165) (Haemophilus parasuis).